Reading from the N-terminus, the 201-residue chain is Ribosome maturation factor RimP (201 aa).

It belongs to the RimP family.

It is found in the cytoplasm. Its function is as follows. Required for maturation of 30S ribosomal subunits. This chain is Ribosome maturation factor RimP, found in Rhizobium johnstonii (strain DSM 114642 / LMG 32736 / 3841) (Rhizobium leguminosarum bv. viciae).